Consider the following 180-residue polypeptide: Hypoxanthine-guanine phosphoribosyltransferase (180 aa).

2 residues coordinate diphosphate: Lys43 and Gly44. Positions 99 and 100 each coordinate Mg(2+). Asp103 serves as the catalytic Proton acceptor. GMP contacts are provided by residues Lys131, 152 to 153 (FV), and Asp159. Residue Arg165 participates in diphosphate binding.

This sequence belongs to the purine/pyrimidine phosphoribosyltransferase family. It depends on Mg(2+) as a cofactor.

The protein localises to the cytoplasm. It carries out the reaction IMP + diphosphate = hypoxanthine + 5-phospho-alpha-D-ribose 1-diphosphate. The catalysed reaction is GMP + diphosphate = guanine + 5-phospho-alpha-D-ribose 1-diphosphate. The protein operates within purine metabolism; IMP biosynthesis via salvage pathway; IMP from hypoxanthine: step 1/1. It functions in the pathway purine metabolism; GMP biosynthesis via salvage pathway; GMP from guanine: step 1/1. Its function is as follows. Purine salvage pathway enzyme that catalyzes the transfer of the ribosyl-5-phosphate group from 5-phospho-alpha-D-ribose 1-diphosphate (PRPP) to the N9 position of the 6-oxopurines hypoxanthine and guanine to form the corresponding ribonucleotides IMP (inosine 5'-monophosphate) and GMP (guanosine 5'-monophosphate), with the release of PPi. The polypeptide is Hypoxanthine-guanine phosphoribosyltransferase (hprT) (Bacillus subtilis (strain 168)).